A 79-amino-acid chain; its full sequence is Delta-hormotoxin-Cpt1b (79 aa).

The signal sequence occupies residues 1–20; it reads MKTQVLALFVLCVLFCLAES. A propeptide spanning residues 21–31 is cleaved from the precursor; that stretch reads RTTLNKRNDIE. 3 disulfides stabilise this stretch: Cys36/Cys75, Cys38/Cys66, and Cys56/Cys76.

It belongs to the sea anemone sodium channel inhibitory toxin family.

It is found in the secreted. It localises to the nematocyst. Its function is as follows. In neuromuscular preparation of crustaceans, the toxin increased neurotransmitter release, causing repetitive firing of the axons. May affect sodium channels (Nav). The chain is Delta-hormotoxin-Cpt1b from Calliactis parasitica (Sea anemone).